A 698-amino-acid polypeptide reads, in one-letter code: MANKREFPLDKTRNIGIMAHIDAGKTTTTERILYYTGKIHKIGETHEGDSQMDWMEEEKERGITITSAATTAQWKDYRINIIDTPGHVDFTIEVERSLRVLDGAVTVLDAQAGVEPQTENVWRQAETYGVPRIVFVNKMDKIGADFDKSVKSLHERLNANAQAVQMPIGSADTFEGVIDLINMVADVYDEDKLGSKWDTIPVPDEYKEEALKRRNELIEAVADVDDGIMDKYLGGEEISNDELKAAIRKATLNLEFFPVYAGSAFKNKGVQMMLDGVVDYLPSPLDVKPYVAHDPKTGDEVELMADDKKPFAALAFKIATDPFVGRLTFIRVYTGSLQSGSYVLNASKNSRERVGRLLQMHANSRTEISEVFSGDIAGAIGLKNTTTGDSLTDPAHPLILESLQVPDPVIQVSVEPKSKADRDKMDVALQKLTEEDPTFRAETNPETGQTLISGMGELHLDIMVERMKREFNVEATIGEPQVAYRETFTKEAKAQGKFVRQSGGKGQYGDVWIEFTPNEEGKGYEFEDAIVGGVVPREFIPSVDQGLQEAMKNGVLAGYPLIDVKAKLYDGSYHEVDSSEAAFKVAASLALRNAASKAGAVILEPIMKVQVTTPEEYLGDVMGSITARRGSMEGMEDRAGAKVINSFVPLSEMFGYATTLRSSTQGRGTFTMVFDHYSPTPKSIQADIIKKRGGEDAE.

The tr-type G domain occupies 10-285; it reads DKTRNIGIMA…GVVDYLPSPL (276 aa). Residues 19–26, 83–87, and 137–140 contribute to the GTP site; these read AHIDAGKT, DTPGH, and NKMD.

The protein belongs to the TRAFAC class translation factor GTPase superfamily. Classic translation factor GTPase family. EF-G/EF-2 subfamily.

Its subcellular location is the cytoplasm. Functionally, catalyzes the GTP-dependent ribosomal translocation step during translation elongation. During this step, the ribosome changes from the pre-translocational (PRE) to the post-translocational (POST) state as the newly formed A-site-bound peptidyl-tRNA and P-site-bound deacylated tRNA move to the P and E sites, respectively. Catalyzes the coordinated movement of the two tRNA molecules, the mRNA and conformational changes in the ribosome. In Lactobacillus johnsonii (strain CNCM I-12250 / La1 / NCC 533), this protein is Elongation factor G.